Reading from the N-terminus, the 314-residue chain is Transmembrane protein 248 (314 aa).

The helical transmembrane segment at 21–41 (VVFMISVSAMAIAFLTLGYFF) threads the bilayer. Positions 78–106 (LTNDTTTPESTMTSGQARASTQSPQALED) are disordered. The segment covering 80-102 (NDTTTPESTMTSGQARASTQSPQ) has biased composition (polar residues). A run of 3 helical transmembrane segments spans residues 179-199 (QVVF…PVTV), 236-258 (FWCY…TVIV), and 270-290 (LMHT…YAVI).

Belongs to the TMEM248 family.

It localises to the membrane. The polypeptide is Transmembrane protein 248 (TMEM248) (Homo sapiens (Human)).